Consider the following 115-residue polypeptide: Glycine cleavage system H-like protein (115 aa).

Residues 17-99 (VVRLGLTEKM…EGEGWLAVVR (83 aa)) enclose the Lipoyl-binding domain. Lysine 58 is modified (N6-lipoyllysine).

The protein belongs to the GcvH family. The cofactor is (R)-lipoate.

This Chlamydia pneumoniae (Chlamydophila pneumoniae) protein is Glycine cleavage system H-like protein.